A 427-amino-acid polypeptide reads, in one-letter code: Glucose-6-phosphate isomerase (427 aa).

The active-site Proton donor is the Glu-277. Residues His-298 and Lys-414 contribute to the active site.

It belongs to the GPI family.

Its subcellular location is the cytoplasm. The catalysed reaction is alpha-D-glucose 6-phosphate = beta-D-fructose 6-phosphate. It functions in the pathway carbohydrate biosynthesis; gluconeogenesis. The protein operates within carbohydrate degradation; glycolysis; D-glyceraldehyde 3-phosphate and glycerone phosphate from D-glucose: step 2/4. Functionally, catalyzes the reversible isomerization of glucose-6-phosphate to fructose-6-phosphate. This chain is Glucose-6-phosphate isomerase, found in Mycoplasma capricolum subsp. capricolum (strain California kid / ATCC 27343 / NCTC 10154).